The following is a 365-amino-acid chain: UDP-N-acetylglucosamine--N-acetylmuramyl-(pentapeptide) pyrophosphoryl-undecaprenol N-acetylglucosamine transferase (365 aa).

UDP-N-acetyl-alpha-D-glucosamine contacts are provided by residues T17 to G19, N129, R167, S194, I250, A269 to E274, and Q295.

Belongs to the glycosyltransferase 28 family. MurG subfamily.

It localises to the cell inner membrane. It catalyses the reaction di-trans,octa-cis-undecaprenyl diphospho-N-acetyl-alpha-D-muramoyl-L-alanyl-D-glutamyl-meso-2,6-diaminopimeloyl-D-alanyl-D-alanine + UDP-N-acetyl-alpha-D-glucosamine = di-trans,octa-cis-undecaprenyl diphospho-[N-acetyl-alpha-D-glucosaminyl-(1-&gt;4)]-N-acetyl-alpha-D-muramoyl-L-alanyl-D-glutamyl-meso-2,6-diaminopimeloyl-D-alanyl-D-alanine + UDP + H(+). The protein operates within cell wall biogenesis; peptidoglycan biosynthesis. Its function is as follows. Cell wall formation. Catalyzes the transfer of a GlcNAc subunit on undecaprenyl-pyrophosphoryl-MurNAc-pentapeptide (lipid intermediate I) to form undecaprenyl-pyrophosphoryl-MurNAc-(pentapeptide)GlcNAc (lipid intermediate II). This is UDP-N-acetylglucosamine--N-acetylmuramyl-(pentapeptide) pyrophosphoryl-undecaprenol N-acetylglucosamine transferase from Shewanella halifaxensis (strain HAW-EB4).